The sequence spans 263 residues: Cytochrome c oxidase subunit 3 (263 aa).

Helical transmembrane passes span 9–29 (PFHM…AMIL), 40–60 (FNMN…IQWW), 84–104 (GMIL…WAFF), 129–149 (IQIP…ITWA), 161–181 (ALQG…LQMY), 198–218 (TFFV…TFLL), and 241–261 (AWYW…IYWW).

This sequence belongs to the cytochrome c oxidase subunit 3 family. As to quaternary structure, component of the cytochrome c oxidase (complex IV, CIV), a multisubunit enzyme composed of a catalytic core of 3 subunits and several supernumerary subunits. The complex exists as a monomer or a dimer and forms supercomplexes (SCs) in the inner mitochondrial membrane with ubiquinol-cytochrome c oxidoreductase (cytochrome b-c1 complex, complex III, CIII).

It localises to the mitochondrion inner membrane. The enzyme catalyses 4 Fe(II)-[cytochrome c] + O2 + 8 H(+)(in) = 4 Fe(III)-[cytochrome c] + 2 H2O + 4 H(+)(out). In terms of biological role, component of the cytochrome c oxidase, the last enzyme in the mitochondrial electron transport chain which drives oxidative phosphorylation. The respiratory chain contains 3 multisubunit complexes succinate dehydrogenase (complex II, CII), ubiquinol-cytochrome c oxidoreductase (cytochrome b-c1 complex, complex III, CIII) and cytochrome c oxidase (complex IV, CIV), that cooperate to transfer electrons derived from NADH and succinate to molecular oxygen, creating an electrochemical gradient over the inner membrane that drives transmembrane transport and the ATP synthase. Cytochrome c oxidase is the component of the respiratory chain that catalyzes the reduction of oxygen to water. Electrons originating from reduced cytochrome c in the intermembrane space (IMS) are transferred via the dinuclear copper A center (CU(A)) of subunit 2 and heme A of subunit 1 to the active site in subunit 1, a binuclear center (BNC) formed by heme A3 and copper B (CU(B)). The BNC reduces molecular oxygen to 2 water molecules using 4 electrons from cytochrome c in the IMS and 4 protons from the mitochondrial matrix. This is Cytochrome c oxidase subunit 3 (COIII) from Locusta migratoria (Migratory locust).